We begin with the raw amino-acid sequence, 232 residues long: Caffeoyl-CoA O-methyltransferase (232 aa).

K6 is a substrate binding site. Residues T48, E70, G72–V73, S78, D96, and A125 contribute to the S-adenosyl-L-methionine site. D148 provides a ligand contact to substrate. Position 148 (D148) interacts with a divalent metal cation. D150 lines the S-adenosyl-L-methionine pocket. The a divalent metal cation site is built by D174 and N175. Residue N179 participates in substrate binding.

This sequence belongs to the class I-like SAM-binding methyltransferase superfamily. Cation-dependent O-methyltransferase family. CCoAMT subfamily. Requires a divalent metal cation as cofactor.

It catalyses the reaction (E)-caffeoyl-CoA + S-adenosyl-L-methionine = (E)-feruloyl-CoA + S-adenosyl-L-homocysteine + H(+). It functions in the pathway aromatic compound metabolism; phenylpropanoid biosynthesis. Functionally, methylates caffeoyl-CoA to feruloyl-CoA and 5-hydroxyferuloyl-CoA to sinapoyl-CoA. Plays a role in the synthesis of feruloylated polysaccharides. Involved in the reinforcement of the plant cell wall. Also involved in the responding to wounding or pathogen challenge by the increased formation of cell wall-bound ferulic acid polymers. The protein is Caffeoyl-CoA O-methyltransferase of Citrus natsudaidai (Natsudaidai orange).